A 436-amino-acid polypeptide reads, in one-letter code: 3-ketoacyl-CoA thiolase (436 aa).

Cys-99 serves as the catalytic Acyl-thioester intermediate. Catalysis depends on proton acceptor residues His-392 and Cys-422.

It belongs to the thiolase-like superfamily. Thiolase family. In terms of assembly, heterotetramer of two alpha chains (FadJ) and two beta chains (FadI).

The protein localises to the cytoplasm. The enzyme catalyses an acyl-CoA + acetyl-CoA = a 3-oxoacyl-CoA + CoA. Its pathway is lipid metabolism; fatty acid beta-oxidation. In terms of biological role, catalyzes the final step of fatty acid oxidation in which acetyl-CoA is released and the CoA ester of a fatty acid two carbons shorter is formed. The polypeptide is 3-ketoacyl-CoA thiolase (Serratia proteamaculans (strain 568)).